The chain runs to 475 residues: Ribulose bisphosphate carboxylase large chain (475 aa).

Residues 1 to 2 (MS) constitute a propeptide that is removed on maturation. Pro3 is modified (N-acetylproline). Asn123 and Thr173 together coordinate substrate. The active-site Proton acceptor is the Lys175. Lys177 lines the substrate pocket. Mg(2+)-binding residues include Lys201, Asp203, and Glu204. N6-carboxylysine is present on Lys201. His294 serves as the catalytic Proton acceptor. The substrate site is built by Arg295, His327, and Ser379.

This sequence belongs to the RuBisCO large chain family. Type I subfamily. Heterohexadecamer of 8 large chains and 8 small chains; disulfide-linked. The disulfide link is formed within the large subunit homodimers. Mg(2+) is required as a cofactor. The disulfide bond which can form in the large chain dimeric partners within the hexadecamer appears to be associated with oxidative stress and protein turnover.

The protein localises to the plastid. The protein resides in the chloroplast. The catalysed reaction is 2 (2R)-3-phosphoglycerate + 2 H(+) = D-ribulose 1,5-bisphosphate + CO2 + H2O. The enzyme catalyses D-ribulose 1,5-bisphosphate + O2 = 2-phosphoglycolate + (2R)-3-phosphoglycerate + 2 H(+). In terms of biological role, ruBisCO catalyzes two reactions: the carboxylation of D-ribulose 1,5-bisphosphate, the primary event in carbon dioxide fixation, as well as the oxidative fragmentation of the pentose substrate in the photorespiration process. Both reactions occur simultaneously and in competition at the same active site. The chain is Ribulose bisphosphate carboxylase large chain from Welwitschia mirabilis (Tree tumbo).